Reading from the N-terminus, the 308-residue chain is C-4 methylsterol oxidase (308 aa).

Residues 56–76 (LLFFLTHEIFYFGRCLPWAII) traverse the membrane as a helical segment. The Fatty acid hydroxylase domain maps to 145 to 282 (WAVFFVLEDT…FRWWDFILDT (138 aa)). The Histidine box-1 signature appears at 160-164 (HRGLH). A Histidine box-2 motif is present at residues 173–177 (HKQHH). The Histidine box-3 motif lies at 257–263 (HHDEHHH).

It belongs to the sterol desaturase family. The cofactor is Fe cation.

The protein localises to the endoplasmic reticulum membrane. It carries out the reaction 4,4-dimethyl-5alpha-cholest-7-en-3beta-ol + 6 Fe(II)-[cytochrome b5] + 3 O2 + 5 H(+) = 4alpha-carboxy-4beta-methyl-5alpha-cholest-7-ene-3beta-ol + 6 Fe(III)-[cytochrome b5] + 4 H2O. It functions in the pathway steroid biosynthesis; zymosterol biosynthesis; zymosterol from lanosterol: step 3/6. C-4 methylsterol oxidase; part of the third module of ergosterol biosynthesis pathway that includes the late steps of the pathway. ERG25 is a catalytic component of the C-4 demethylation complex that catalyzes the conversion of 4,4-dimethylfecosterol into fecosterol via 4-methylfecosterol. Catalyzes the three-step monooxygenation required for the demethylation of 4,4-dimethyl and 4alpha-methylsterols. The third module or late pathway involves the ergosterol synthesis itself through consecutive reactions that mainly occur in the endoplasmic reticulum (ER) membrane. Firstly, the squalene synthase ERG9 catalyzes the condensation of 2 farnesyl pyrophosphate moieties to form squalene, which is the precursor of all steroids. Squalene synthase is crucial for balancing the incorporation of farnesyl diphosphate (FPP) into sterol and nonsterol isoprene synthesis. Secondly, the squalene epoxidase ERG1 catalyzes the stereospecific oxidation of squalene to (S)-2,3-epoxysqualene, which is considered to be a rate-limiting enzyme in steroid biosynthesis. Then, the lanosterol synthase ERG7 catalyzes the cyclization of (S)-2,3 oxidosqualene to lanosterol, a reaction that forms the sterol core. In the next steps, lanosterol is transformed to zymosterol through a complex process involving various demethylation, reduction and desaturation reactions. The lanosterol 14-alpha-demethylase ERG11 (also known as CYP51) catalyzes C14-demethylation of lanosterol to produce 4,4'-dimethyl cholesta-8,14,24-triene-3-beta-ol, which is critical for ergosterol biosynthesis. The C-14 reductase ERG24 reduces the C14=C15 double bond of 4,4-dimethyl-cholesta-8,14,24-trienol to produce 4,4-dimethyl-cholesta-8,24-dienol. 4,4-dimethyl-cholesta-8,24-dienol is substrate of the C-4 demethylation complex ERG25-ERG26-ERG27 in which ERG25 catalyzes the three-step monooxygenation required for the demethylation of 4,4-dimethyl and 4alpha-methylsterols, ERG26 catalyzes the oxidative decarboxylation that results in a reduction of the 3-beta-hydroxy group at the C-3 carbon to an oxo group, and ERG27 is responsible for the reduction of the keto group on the C-3. ERG28 has a role as a scaffold to help anchor ERG25, ERG26 and ERG27 to the endoplasmic reticulum and ERG29 regulates the activity of the iron-containing C4-methylsterol oxidase ERG25. Then, the sterol 24-C-methyltransferase ERG6 catalyzes the methyl transfer from S-adenosyl-methionine to the C-24 of zymosterol to form fecosterol. The C-8 sterol isomerase ERG2 catalyzes the reaction which results in unsaturation at C-7 in the B ring of sterols and thus converts fecosterol to episterol. The sterol-C5-desaturase ERG3 then catalyzes the introduction of a C-5 double bond in the B ring to produce 5-dehydroepisterol. The C-22 sterol desaturase ERG5 further converts 5-dehydroepisterol into ergosta-5,7,22,24(28)-tetraen-3beta-ol by forming the C-22(23) double bond in the sterol side chain. Finally, ergosta-5,7,22,24(28)-tetraen-3beta-ol is substrate of the C-24(28) sterol reductase ERG4 to produce ergosterol. This Candida albicans (strain SC5314 / ATCC MYA-2876) (Yeast) protein is C-4 methylsterol oxidase.